Consider the following 257-residue polypeptide: AN1-type zinc finger protein 2B (257 aa).

2 AN1-type zinc fingers span residues 4–52 and 94–142; these read PDLG…QKDI and KIFT…HPTS. Positions 10, 15, 25, 28, 33, 36, 42, 44, 100, 105, 115, 118, 123, 126, 132, and 134 each coordinate Zn(2+). The tract at residues 141-151 is VCP/p97-interacting motif (VIM); sequence TSRAGLAAISR. A disordered region spans residues 153-187; it reads QAVASTSTVPSPSQTMPSCTSPSRATTRSPSWTAP. Over residues 155–171 the composition is skewed to polar residues; sequence VASTSTVPSPSQTMPSC. Phosphoserine occurs at positions 163 and 173. The span at 172 to 186 shows a compositional bias: low complexity; it reads TSPSRATTRSPSWTA. 2 UIM domains span residues 197-216 and 221-240; these read SEDEALQRALEMSLAETKPQ and QEEEDLALAQALSASEAEYQ. Cys-254 bears the Cysteine methyl ester mark. A lipid anchor (S-geranylgeranyl cysteine) is attached at Cys-254. The short motif at 254–257 is the CAAX motif element; the sequence is CSLC. Positions 255-257 are cleaved as a propeptide — removed in mature form; sequence SLC.

As to quaternary structure, binds 'Lys-48'-linked polyubiquitin chains of ubiquitinated proteins. Associates with the proteasome complex; upon exposure to arsenite. Interacts (via VIM motif) with VCP; the interaction is direct. Interacts with BAG6. Interacts with IGF1R (nascent precursor form). Interacts with DERL1, FAF2, NPLOC4 and UFD1; probably through VCP. In terms of processing, phosphorylated by MAPK14. Phosphorylation has no effect on association with the proteasome complex.

It is found in the endoplasmic reticulum membrane. Plays a role in protein homeostasis by regulating both the translocation and the ubiquitin-mediated proteasomal degradation of nascent proteins at the endoplasmic reticulum. It is involved in the regulation of signal-mediated translocation of proteins into the endoplasmic reticulum. It also plays a role in the ubiquitin-mediated proteasomal degradation of proteins for which signal-mediated translocation to the endoplasmic reticulum has failed. May therefore function in the endoplasmic reticulum stress-induced pre-emptive quality control, a mechanism that selectively attenuates the translocation of newly synthesized proteins into the endoplasmic reticulum and reroutes them to the cytosol for proteasomal degradation. By controlling the steady-state expression of the IGF1R receptor, indirectly regulates the insulin-like growth factor receptor signaling pathway. In Homo sapiens (Human), this protein is AN1-type zinc finger protein 2B.